The sequence spans 324 residues: Elongation factor P--(R)-beta-lysine ligase (324 aa).

Residue 75 to 77 (SPE) participates in substrate binding. ATP contacts are provided by residues 99-101 (RNE) and asparagine 108. Residue tyrosine 117 participates in substrate binding. 243–244 (EL) is a binding site for ATP. Glutamate 250 is a substrate binding site. Glycine 299 contributes to the ATP binding site.

Belongs to the class-II aminoacyl-tRNA synthetase family. EpmA subfamily. In terms of assembly, homodimer.

It carries out the reaction D-beta-lysine + L-lysyl-[protein] + ATP = N(6)-((3R)-3,6-diaminohexanoyl)-L-lysyl-[protein] + AMP + diphosphate + H(+). Its function is as follows. With EpmB is involved in the beta-lysylation step of the post-translational modification of translation elongation factor P (EF-P). Catalyzes the ATP-dependent activation of (R)-beta-lysine produced by EpmB, forming a lysyl-adenylate, from which the beta-lysyl moiety is then transferred to the epsilon-amino group of a conserved specific lysine residue in EF-P. The protein is Elongation factor P--(R)-beta-lysine ligase of Vibrio cholerae serotype O1 (strain ATCC 39315 / El Tor Inaba N16961).